The primary structure comprises 529 residues: Delayed-rectifier potassium channel regulatory subunit KCNS1 (529 aa).

The Cytoplasmic segment spans residues 1 to 217 (MLMLLVRGTR…LTMENPGYSL (217 aa)). The chain crosses the membrane as a helical span at residues 218–239 (PSKLFSCVSISVVLASIAAMCI). The Extracellular segment spans residues 240-270 (HSLPEYQAREAAAAVAAVAAGRSPEGVRDDP). The chain crosses the membrane as a helical span at residues 271 to 293 (VLRRLEYFCIAWFSFEVSSRLLL). Residues 294–304 (APSTRNFFCHP) lie on the Cytoplasmic side of the membrane. Residues 305–322 (LNLIDIVSVLPFYLTLLA) traverse the membrane as a helical segment. Topologically, residues 323-340 (GVALGDQGGTGGKELGHL) are extracellular. A helical; Voltage-sensor membrane pass occupies residues 341-361 (GKVVQVFRLMRIFRVLKLARH). Over 362 to 376 (STGLRSLGATLKHSY) the chain is Cytoplasmic. A helical transmembrane segment spans residues 377–398 (REVGILLLYLAVGVSVFSGVAY). The Extracellular portion of the chain corresponds to 399-411 (TAEKEEDVGFNTI). Residues 412–423 (PACWWWGTVSMT) constitute an intramembrane region (helical). A Selectivity filter motif is present at residues 424–429 (TVGYGD). Residues 424-431 (TVGYGDVV) lie within the membrane without spanning it. At 432–438 (PVTVAGK) the chain is on the extracellular side. A helical membrane pass occupies residues 439–467 (LAASGCILGGILVVALPITIIFNKFSHFY). The Cytoplasmic portion of the chain corresponds to 468 to 529 (RRQKALEAAV…PSEPPHPQMY (62 aa)). Residues 500 to 529 (LETSREISQEGRSADLETQAPSEPPHPQMY) form a disordered region. Over residues 502 to 514 (TSREISQEGRSAD) the composition is skewed to basic and acidic residues.

Belongs to the potassium channel family. S (TC 1.A.1.2) subfamily. Kv9.1/KCNS1 sub-subfamily. As to quaternary structure, heterotetramer with KCNB1. Heterotetramer with KCNB2. Does not form homomultimers.

It localises to the cell membrane. Functionally, potassium channel regulatory subunit that modulate the delayed rectifier voltage-gated potassium channel activity of KCNB1 and KCNB2 by altering their kinetics, expression levels, and shifting the half-inactivation potential to more polarized values. While it does not form functional channels on its own, it can form functional heterotetrameric channels with KCNB1 and KCNB2. Each regulatory subunit has unique regulatory properties that can lead to extensive inhibition, significant changes in kinetics, and/or substantial shifts in the voltage dependencies of the inactivation process. The chain is Delayed-rectifier potassium channel regulatory subunit KCNS1 from Colobus guereza (Mantled guereza).